A 339-amino-acid polypeptide reads, in one-letter code: uncharacterized protein (339 aa).

2 consecutive VOC domains span residues 2–127 and 141–276; these read EFDY…VRSE and TIDH…CLEI. Histidine 144, histidine 222, and glutamate 306 together coordinate Fe cation.

This sequence belongs to the 4HPPD family. Requires Fe cation as cofactor.

This is an uncharacterized protein from Synechocystis sp. (strain ATCC 27184 / PCC 6803 / Kazusa).